Here is a 144-residue protein sequence, read N- to C-terminus: Grifin (144 aa).

The 129-residue stretch at 5 to 133 folds into the Galectin domain; sequence SKAFCAGGLA…DHCLAQVELA (129 aa). At S138 the chain carries Phosphoserine.

In terms of assembly, homodimer. In terms of tissue distribution, not detected in lens.

The chain is Grifin (GRIFIN) from Homo sapiens (Human).